Here is a 185-residue protein sequence, read N- to C-terminus: Urease accessory protein UreE (185 aa).

Residues leucine 153–histidine 185 are disordered. The segment covering glycine 162–histidine 175 has biased composition (basic residues). Over residues histidine 176 to histidine 185 the composition is skewed to basic and acidic residues.

Belongs to the UreE family.

Its subcellular location is the cytoplasm. Involved in urease metallocenter assembly. Binds nickel. Probably functions as a nickel donor during metallocenter assembly. The chain is Urease accessory protein UreE from Haemophilus influenzae (strain PittEE).